The primary structure comprises 477 residues: Calcium uptake protein 1, mitochondrial (477 aa).

The transit peptide at methionine 1–leucine 33 directs the protein to the mitochondrion. The interval alanine 57 to glycine 107 is disordered. Residues lysine 66–alanine 89 show a composition bias toward basic and acidic residues. The interval lysine 101–lysine 112 is polybasic region. The residue at position 124 (serine 124) is a Phosphoserine; by PKB. The segment at lysine 128–arginine 131 is k/R-ring. One can recognise an EF-hand 1 domain in the interval threonine 220–glutamine 255. Ca(2+) contacts are provided by aspartate 233, asparagine 235, aspartate 237, glutamate 239, and glutamate 244. Residues arginine 261–arginine 265 are k/R-ring. The 21-residue stretch at lysine 356 to isoleucine 376 folds into the EF-hand 2; degenerate domain. The region spanning leucine 410–arginine 445 is the EF-hand 3 domain. Aspartate 423, aspartate 425, asparagine 427, glutamate 429, and glutamate 434 together coordinate Ca(2+). Position 457 is an asymmetric dimethylarginine (arginine 457). A C-helix region region spans residues arginine 457–glutamine 467.

It belongs to the MICU1 family. MICU1 subfamily. As to quaternary structure, heterodimer; disulfide-linked; heterodimerizes with MICU2 or MICU3. Homodimer; disulfide-linked. Component of the uniplex complex, composed of MCU, EMRE/SMDT1, MICU1 and MICU2 (or MICU3) in a 4:4:1:1 stoichiometry. The composition of calcium sensors within the uniplex complex can differ depending on tissues: a MICU1 homodimer can be present instead of the MICU1-MICU2 heterodimer in skeletal-muscle and kidney. MICU1 is recruited to the uniplex complex by EMRE/SMDT1, and it associates with MCU at low calcium levels, occluding the pore of the MCU channel. Associates with the MICOS complex. Interacts with SLC25A23. Interacts with CHCHD4/MIA40; which introduces the interchain disulfide bond with MICU2. Interacts (when methylated) with UCP2; leading to decrease the calcium sensitivity of MICU1. In terms of assembly, heterodimer; disulfide-linked; heterodimerizes with MICU2 or MICU3. Heterodimerizes with MICU3 in skeletal muscle. Component of the uniplex complex, composed of MCU, EMRE/SMDT1, MICU1 and MICU2 (or MICU3) in a 4:4:1:1 stoichiometry. Also localizes to mitochondrial cristae junctions. Phosphorylation at Ser-124 by AKT1 impairs its maturation and stability. In terms of processing, asymmetric dimethylation at Arg-457 by PRMT1 decreases the calcium sensitivity of MICU1 by promoting interaction with UCP2. Post-translationally, degraded by YME1L1 when not complexed as homodimer or heterodimer. Not degraded when complexed as homodimer or heterodimer; the presence of the interchain disulfide bond protecting MICU1 from degradation by YME1L1. As to expression, expressed in skeletal muscle, heart, kidney, liver, brain, lung, fat and spleen. Specifically expressed in the skeletal muscle.

It localises to the mitochondrion intermembrane space. It is found in the mitochondrion inner membrane. Functionally, calcium sensor of the mitochondrial calcium uniporter (MCU) channel, which senses calcium level via its EF-hand domains. MICU1 and MICU2 (or MICU3) form a disulfide-linked heterodimer that stimulates and inhibits MCU activity, depending on the concentration of calcium. At low calcium levels, MICU1 occludes the pore of the MCU channel, preventing mitochondrial calcium uptake. At higher calcium levels, calcium-binding to MICU1 and MICU2 (or MICU3) induces a conformational change that weakens MCU-MICU1 interactions and moves the MICU1-MICU2 heterodimer away from the pore, allowing calcium permeation through the MCU channel. Also required to protect against manganese toxicity by preventing manganese uptake by MCU: mechanistically, manganese-binding to its EF-hand domains does not induce any conformational change, maintaining MCU pore occlusion. Acts as a regulator of mitochondrial cristae structure independently of its ability to regulate the mitochondrial calcium uniporter channel. Regulates glucose-dependent insulin secretion in pancreatic beta-cells by regulating mitochondrial calcium uptake. Induces T-helper 1-mediated autoreactivity, which is accompanied by the release of IFNG. Its function is as follows. Isoform that regulates mitochondrial calcium uniporter (MCU) in the skeletal muscle. Compared to other isoforms, this isoform has higher affinity for calcium, promoting mitochondrial calcium uptake at lower calcium concentrations. This allows a rapid response of mitochondrial metabolism and ensures sustained ATP production needed for resistance and strenuous exercise. The sequence is that of Calcium uptake protein 1, mitochondrial from Mus musculus (Mouse).